We begin with the raw amino-acid sequence, 314 residues long: Altered inheritance of mitochondria protein 6 homolog ARB_06966 (314 aa).

Residues 1 to 21 form the signal peptide; that stretch reads MKSSILASAAILAASLEPVAA. Residues Asn91 and Asn184 are each glycosylated (N-linked (GlcNAc...) asparagine).

Belongs to the AIM6 family.

The protein localises to the secreted. The chain is Altered inheritance of mitochondria protein 6 homolog ARB_06966 from Arthroderma benhamiae (strain ATCC MYA-4681 / CBS 112371) (Trichophyton mentagrophytes).